The chain runs to 143 residues: Peptide methionine sulfoxide reductase MsrB (143 aa).

One can recognise a MsrB domain in the interval 5–126; the sequence is KEEKIKSLNR…NSAALRFVPK (122 aa). Residue Cys115 is the Nucleophile of the active site.

It belongs to the MsrB Met sulfoxide reductase family.

The enzyme catalyses L-methionyl-[protein] + [thioredoxin]-disulfide + H2O = L-methionyl-(R)-S-oxide-[protein] + [thioredoxin]-dithiol. This chain is Peptide methionine sulfoxide reductase MsrB, found in Bacillus subtilis (strain 168).